The primary structure comprises 136 residues: Alpha-2-purothionin (136 aa).

Positions 1-27 (MGSKGLKGVMVCLLILGLVLEQVQVEG) are cleaved as a signal peptide. Disulfide bonds link cysteine 30-cysteine 66, cysteine 31-cysteine 58, cysteine 39-cysteine 56, and cysteine 43-cysteine 52. Positions 73-136 (LALESNSDEP…GDAGLTSLDA (64 aa)) are cleaved as a propeptide — acidic domain.

It belongs to the plant thionin (TC 1.C.44) family. 4 C-C subfamily.

Its subcellular location is the secreted. Its function is as follows. Thionins are small plant proteins which are toxic to animal cells. They seem to exert their toxic effect at the level of the cell membrane. Their precise function is not known. The polypeptide is Alpha-2-purothionin (THI1.2) (Triticum aestivum (Wheat)).